A 153-amino-acid polypeptide reads, in one-letter code: Protein-export protein SecB (153 aa).

The protein belongs to the SecB family. As to quaternary structure, homotetramer, a dimer of dimers. One homotetramer interacts with 1 SecA dimer.

The protein localises to the cytoplasm. In terms of biological role, one of the proteins required for the normal export of preproteins out of the cell cytoplasm. It is a molecular chaperone that binds to a subset of precursor proteins, maintaining them in a translocation-competent state. It also specifically binds to its receptor SecA. The sequence is that of Protein-export protein SecB from Erwinia tasmaniensis (strain DSM 17950 / CFBP 7177 / CIP 109463 / NCPPB 4357 / Et1/99).